The primary structure comprises 490 residues: Betaine aldehyde dehydrogenase (490 aa).

Asp93 is a K(+) binding site. Residue 150 to 152 (GAW) coordinates NAD(+). Lys162 acts as the Charge relay system in catalysis. NAD(+) is bound at residue 176–179 (KPSE). Residue Val180 coordinates K(+). 230–233 (GIAS) is an NAD(+) binding site. Leu246 lines the K(+) pocket. Glu252 serves as the catalytic Proton acceptor. The NAD(+) site is built by Gly254, Cys286, and Glu387. Cys286 (nucleophile) is an active-site residue. Cys286 carries the cysteine sulfenic acid (-SOH) modification. Positions 457 and 460 each coordinate K(+). The active-site Charge relay system is Glu464.

This sequence belongs to the aldehyde dehydrogenase family. In terms of assembly, dimer of dimers. The cofactor is K(+).

It carries out the reaction betaine aldehyde + NAD(+) + H2O = glycine betaine + NADH + 2 H(+). It functions in the pathway amine and polyamine biosynthesis; betaine biosynthesis via choline pathway; betaine from betaine aldehyde: step 1/1. Involved in the biosynthesis of the osmoprotectant glycine betaine. Catalyzes the irreversible oxidation of betaine aldehyde to the corresponding acid. The sequence is that of Betaine aldehyde dehydrogenase from Yersinia pestis.